The chain runs to 616 residues: Chaperone protein HscA homolog (616 aa).

The protein belongs to the heat shock protein 70 family.

Functionally, probable chaperone. Has a low intrinsic ATPase activity which is markedly stimulated by HscB. This is Chaperone protein HscA homolog from Vibrio cholerae serotype O1 (strain ATCC 39315 / El Tor Inaba N16961).